A 109-amino-acid polypeptide reads, in one-letter code: N-cym protein (109 aa).

In terms of assembly, interacts with MYCN and GSK3B. As to expression, expressed in the neuronal cells of the cerebrum and cerebellum, spermatocytes of the testis, pancreatic cells and also the heart. Expressed in both primary and metastatic neuroblastomas and in thyroid tumors (at protein level). Expression is associated with poor prognosis in neuroblastoma. Expressed in the fetal brain, lung, liver and kidney at varying low levels.

The protein resides in the cytoplasm. Its subcellular location is the nucleus. Regulates stability of MYCN in neuroblastoma cells by inhibiting GSK3B-mediated MYCN phosphorylation. Inhibits GSK3B activity by promoting its phosphorylation at 'Ser-9'. The sequence is that of N-cym protein (MYCNOS) from Homo sapiens (Human).